We begin with the raw amino-acid sequence, 199 residues long: Prolactin-2 (199 aa).

3 disulfide bridges follow: Cys4/Cys11, Cys58/Cys174, and Cys191/Cys199.

It belongs to the somatotropin/prolactin family.

Its subcellular location is the secreted. In Crocodylus novaeguineae (Crocodile), this protein is Prolactin-2.